The primary structure comprises 98 residues: Large ribosomal subunit protein eL21 (98 aa).

Over residues 1–24 the composition is skewed to basic residues; sequence MVKKAHSFRRKTRGKLSKHPRRRG. Positions 1–27 are disordered; the sequence is MVKKAHSFRRKTRGKLSKHPRRRGLPP.

Belongs to the eukaryotic ribosomal protein eL21 family. In terms of assembly, part of the 50S ribosomal subunit.

The chain is Large ribosomal subunit protein eL21 from Thermococcus kodakarensis (strain ATCC BAA-918 / JCM 12380 / KOD1) (Pyrococcus kodakaraensis (strain KOD1)).